We begin with the raw amino-acid sequence, 960 residues long: ATPase 4, plasma membrane-type (960 aa).

Residues 1-69 (MTTTVEDNRE…EKKESKFLKF (69 aa)) are Cytoplasmic-facing. Residues 70–89 (LGFMWNPLSWVMEAAAIMAI) traverse the membrane as a helical segment. At 90-101 (ALANGGGKPPDW) the chain is on the extracellular side. Residues 102-122 (QDFVGIITLLVINSTISFIEE) traverse the membrane as a helical segment. Topologically, residues 123–251 (NNAGNAAAAL…GHFQQVLTAI (129 aa)) are cytoplasmic. The helical transmembrane segment at 252 to 272 (GNFCICSIAVGMLIEIVVMYP) threads the bilayer. The Extracellular segment spans residues 273 to 281 (IQHRAYRPG). Residues 282–299 (IDNLLVLLIGGIPIAMPT) traverse the membrane as a helical segment. Topologically, residues 300–651 (VLSVTMAIGS…TSRAIFQRMK (352 aa)) are cytoplasmic. D337 functions as the 4-aspartylphosphate intermediate in the catalytic mechanism. Positions 596 and 600 each coordinate Mg(2+). The chain crosses the membrane as a helical span at residues 652-673 (NYTIYAVSITIRIVLGFMLLAL). Residues 674–678 (IWQFD) lie on the Extracellular side of the membrane. A helical membrane pass occupies residues 679–701 (FPPFMVLIIAILNDGTIMTISKD). Over 702-717 (RVKPSPLPDSWKLSEI) the chain is Cytoplasmic. The chain crosses the membrane as a helical span at residues 718–738 (FATGVVFGSYMAMMTVIFFWV). The Extracellular segment spans residues 739 to 763 (SYKTDFFPRTFGVATLEKTAHDDFR). A helical membrane pass occupies residues 764–784 (KLASAIYLQVSIISQALIFVT). At 785-796 (RSRSWSFVERPG) the chain is on the cytoplasmic side. Residues 797 to 817 (IFLMIAFILAQLVATLIAVYA) form a helical membrane-spanning segment. The Extracellular portion of the chain corresponds to 818–825 (NWSFAAIE). The helical transmembrane segment at 826–846 (GIGWGWAGVIWLYNIIFYIPL) threads the bilayer. The Cytoplasmic portion of the chain corresponds to 847-960 (DFIKFFIRYA…IETIQQAYTV (114 aa)). Position 893 is a phosphothreonine (T893). S942 is subject to Phosphoserine. The segment at 958-960 (YTV) is interaction with 14-3-3 proteins. T959 is subject to Phosphothreonine.

Belongs to the cation transport ATPase (P-type) (TC 3.A.3) family. Type IIIA subfamily. Binds to 14-3-3 proteins. The binding is induced by phosphorylation of Thr-959. Binding to 14-3-3 proteins activates the H(+)-ATPase. Expressed in guard cells and roots.

It localises to the cell membrane. The enzyme catalyses ATP + H2O + H(+)(in) = ADP + phosphate + 2 H(+)(out). Functionally, the plasma membrane H(+) ATPase of plants and fungi generates a proton gradient that drives the active transport of nutrients by H(+)-symport. The resulting external acidification and/or internal alkinization may mediate growth responses. The polypeptide is ATPase 4, plasma membrane-type (AHA4) (Arabidopsis thaliana (Mouse-ear cress)).